Here is a 154-residue protein sequence, read N- to C-terminus: Metallothiol transferase FosB (154 aa).

A VOC domain is found at 8-123; the sequence is GINHLLFSVS…DGHKFELHTG (116 aa). Mg(2+) contacts are provided by histidine 11, histidine 70, and glutamate 119. The active-site Proton donor/acceptor is the glutamate 119.

Belongs to the fosfomycin resistance protein family. FosB subfamily. As to quaternary structure, homodimer. Mg(2+) is required as a cofactor.

Its subcellular location is the cytoplasm. Metallothiol transferase which confers resistance to fosfomycin by catalyzing the addition of a thiol cofactor to fosfomycin. L-cysteine is probably the physiological thiol donor. The sequence is that of Metallothiol transferase FosB from Bacillus licheniformis (strain ATCC 14580 / DSM 13 / JCM 2505 / CCUG 7422 / NBRC 12200 / NCIMB 9375 / NCTC 10341 / NRRL NRS-1264 / Gibson 46).